Here is a 624-residue protein sequence, read N- to C-terminus: DNA mismatch repair protein MutL (624 aa).

The segment at 336–357 (GEGFHETSDSFSSRSSQHSDAR) is disordered. Positions 344–353 (DSFSSRSSQH) are enriched in low complexity.

The protein belongs to the DNA mismatch repair MutL/HexB family.

This protein is involved in the repair of mismatches in DNA. It is required for dam-dependent methyl-directed DNA mismatch repair. May act as a 'molecular matchmaker', a protein that promotes the formation of a stable complex between two or more DNA-binding proteins in an ATP-dependent manner without itself being part of a final effector complex. The protein is DNA mismatch repair protein MutL of Chlorobium phaeobacteroides (strain BS1).